Here is a 191-residue protein sequence, read N- to C-terminus: dCTP deaminase (191 aa).

DCTP is bound by residues 112 to 117 (KSTYAR), 136 to 138 (TLE), Gln157, Tyr173, and Gln183. The active-site Proton donor/acceptor is Glu138.

The protein belongs to the dCTP deaminase family. In terms of assembly, homotrimer.

The catalysed reaction is dCTP + H2O + H(+) = dUTP + NH4(+). The protein operates within pyrimidine metabolism; dUMP biosynthesis; dUMP from dCTP (dUTP route): step 1/2. Catalyzes the deamination of dCTP to dUTP. This is dCTP deaminase from Psychrobacter sp. (strain PRwf-1).